A 110-amino-acid polypeptide reads, in one-letter code: Insulin (110 aa).

The first 24 residues, Met1–Ala24, serve as a signal peptide directing secretion. Cystine bridges form between Cys31–Cys96, Cys43–Cys109, and Cys95–Cys100. The propeptide at Glu57 to Gln87 is c peptide.

It belongs to the insulin family. Heterodimer of a B chain and an A chain linked by two disulfide bonds.

It localises to the secreted. In terms of biological role, insulin decreases blood glucose concentration. It increases cell permeability to monosaccharides, amino acids and fatty acids. It accelerates glycolysis, the pentose phosphate cycle, and glycogen synthesis in liver. The chain is Insulin (INS) from Gorilla gorilla gorilla (Western lowland gorilla).